Here is a 343-residue protein sequence, read N- to C-terminus: MGAVDERQRAIDTAVSQIERMCGKGAIMRLGEGAQNVEIPVISTGCLSLDLALGIGGVARGRIMEIFGPESSGKTTLALHVVAEAQKLGGLAAFIDAEHALDVNYARKLGVQVEDLLISQPDYGEQALEIAEILVRSNAIDVIVVDSVAALVPKAEIEGEMGDPHVGLQARLMSQALRKLVSSISKSRTCVIFINQIRMKIGVMYGSPETTTGGNALKFYATMRLDIRRVGPIKDGQEVVGNRTRVKVVKNKIAPPFREVEFDVVYGRGISREGDILDLAVESGAIEKSGTWYSYSGERLGQGRENAKNFLREHPDLLGELERKLREAHNLRFSPGPVTGAGE.

68–75 (GPESSGKT) serves as a coordination point for ATP.

Belongs to the RecA family.

The protein resides in the cytoplasm. Functionally, can catalyze the hydrolysis of ATP in the presence of single-stranded DNA, the ATP-dependent uptake of single-stranded DNA by duplex DNA, and the ATP-dependent hybridization of homologous single-stranded DNAs. It interacts with LexA causing its activation and leading to its autocatalytic cleavage. This is Protein RecA from Syntrophobacter fumaroxidans (strain DSM 10017 / MPOB).